Reading from the N-terminus, the 401-residue chain is Imidazolonepropionase (401 aa).

Histidine 66 and histidine 68 together coordinate Fe(3+). Residues histidine 66 and histidine 68 each contribute to the Zn(2+) site. 4-imidazolone-5-propanoate is bound by residues arginine 75, tyrosine 138, and histidine 171. N-formimidoyl-L-glutamate is bound at residue tyrosine 138. Histidine 236 is a Fe(3+) binding site. Residue histidine 236 participates in Zn(2+) binding. Glutamine 239 is a binding site for 4-imidazolone-5-propanoate. Fe(3+) is bound at residue aspartate 311. Aspartate 311 lines the Zn(2+) pocket. N-formimidoyl-L-glutamate-binding residues include asparagine 313 and glycine 315. Position 316 (threonine 316) interacts with 4-imidazolone-5-propanoate.

This sequence belongs to the metallo-dependent hydrolases superfamily. HutI family. It depends on Zn(2+) as a cofactor. Fe(3+) serves as cofactor.

Its subcellular location is the cytoplasm. The catalysed reaction is 4-imidazolone-5-propanoate + H2O = N-formimidoyl-L-glutamate. Its pathway is amino-acid degradation; L-histidine degradation into L-glutamate; N-formimidoyl-L-glutamate from L-histidine: step 3/3. Catalyzes the hydrolytic cleavage of the carbon-nitrogen bond in imidazolone-5-propanoate to yield N-formimidoyl-L-glutamate. It is the third step in the universal histidine degradation pathway. The chain is Imidazolonepropionase from Pseudomonas fluorescens (strain ATCC BAA-477 / NRRL B-23932 / Pf-5).